The sequence spans 162 residues: NADH-quinone oxidoreductase subunit I (162 aa).

2 consecutive 4Fe-4S ferredoxin-type domains span residues 54-83 (RRYE…IESE) and 93-122 (TRYD…ETQI). The [4Fe-4S] cluster site is built by C63, C66, C69, C73, C102, C105, C108, and C112.

The protein belongs to the complex I 23 kDa subunit family. As to quaternary structure, NDH-1 is composed of 14 different subunits. Subunits NuoA, H, J, K, L, M, N constitute the membrane sector of the complex. [4Fe-4S] cluster is required as a cofactor.

It is found in the cell inner membrane. The enzyme catalyses a quinone + NADH + 5 H(+)(in) = a quinol + NAD(+) + 4 H(+)(out). In terms of biological role, NDH-1 shuttles electrons from NADH, via FMN and iron-sulfur (Fe-S) centers, to quinones in the respiratory chain. The immediate electron acceptor for the enzyme in this species is believed to be ubiquinone. Couples the redox reaction to proton translocation (for every two electrons transferred, four hydrogen ions are translocated across the cytoplasmic membrane), and thus conserves the redox energy in a proton gradient. This Burkholderia cenocepacia (strain HI2424) protein is NADH-quinone oxidoreductase subunit I.